Consider the following 216-residue polypeptide: Cell envelope integrity protein Cei (216 aa).

The helical transmembrane segment at 25–45 (PAIVVVAFLVVVTCVMWTLAL) threads the bilayer.

The protein localises to the cell membrane. Contributes to cell envelope integrity and virulence. This chain is Cell envelope integrity protein Cei, found in Mycobacterium tuberculosis (strain ATCC 25618 / H37Rv).